Consider the following 92-residue polypeptide: Small ribosomal subunit protein uS19 (92 aa).

The protein belongs to the universal ribosomal protein uS19 family.

Functionally, protein S19 forms a complex with S13 that binds strongly to the 16S ribosomal RNA. The chain is Small ribosomal subunit protein uS19 from Bacillus thuringiensis subsp. konkukian (strain 97-27).